We begin with the raw amino-acid sequence, 218 residues long: Deoxyribose-phosphate aldolase (218 aa).

The Proton donor/acceptor role is filled by aspartate 92. Lysine 156 (schiff-base intermediate with acetaldehyde) is an active-site residue. Lysine 185 (proton donor/acceptor) is an active-site residue.

It belongs to the DeoC/FbaB aldolase family. DeoC type 1 subfamily.

The protein localises to the cytoplasm. The enzyme catalyses 2-deoxy-D-ribose 5-phosphate = D-glyceraldehyde 3-phosphate + acetaldehyde. The protein operates within carbohydrate degradation; 2-deoxy-D-ribose 1-phosphate degradation; D-glyceraldehyde 3-phosphate and acetaldehyde from 2-deoxy-alpha-D-ribose 1-phosphate: step 2/2. In terms of biological role, catalyzes a reversible aldol reaction between acetaldehyde and D-glyceraldehyde 3-phosphate to generate 2-deoxy-D-ribose 5-phosphate. The polypeptide is Deoxyribose-phosphate aldolase (Desulfitobacterium hafniense (strain DSM 10664 / DCB-2)).